A 45-amino-acid polypeptide reads, in one-letter code: Photosystem II reaction center protein K (45 aa).

The propeptide occupies 1-8 (MNSALFLA). The chain crosses the membrane as a helical span at residues 23 to 43 (ILPVIPVFFLLLAFVWQAAIG).

The protein belongs to the PsbK family. As to quaternary structure, PSII is composed of 1 copy each of membrane proteins PsbA, PsbB, PsbC, PsbD, PsbE, PsbF, PsbH, PsbI, PsbJ, PsbK, PsbL, PsbM, PsbT, PsbX, PsbY, PsbZ, Psb30/Ycf12, at least 3 peripheral proteins of the oxygen-evolving complex and a large number of cofactors. It forms dimeric complexes.

It is found in the plastid. The protein localises to the chloroplast thylakoid membrane. Functionally, one of the components of the core complex of photosystem II (PSII). PSII is a light-driven water:plastoquinone oxidoreductase that uses light energy to abstract electrons from H(2)O, generating O(2) and a proton gradient subsequently used for ATP formation. It consists of a core antenna complex that captures photons, and an electron transfer chain that converts photonic excitation into a charge separation. The chain is Photosystem II reaction center protein K from Pyropia yezoensis (Susabi-nori).